Consider the following 787-residue polypeptide: (-)-kolavenyl diphosphate synthase, chloroplastic (787 aa).

A chloroplast-targeting transit peptide spans 1 to 47 (MSFATSLPRPTTTGAAGFGLPLATCISLSVSHSFSPKFGICNNTSLR). Lysine 237 contributes to the substrate binding site. Mg(2+) contacts are provided by aspartate 368 and aspartate 370. Positions 368 to 371 (DSDD) match the DXDD motif motif. Position 454 (lysine 454) interacts with substrate.

It belongs to the terpene synthase family. Tpsc subfamily. It depends on Mg(2+) as a cofactor. In terms of tissue distribution, expressed in peltate glandular trichomes of leaves. Highly expressed in the first leaf pair.

The protein localises to the plastid. The protein resides in the chloroplast. It catalyses the reaction (2E,6E,10E)-geranylgeranyl diphosphate = (-)-kolavenyl diphosphate. Inhibited by high concentrations of magnesium. In terms of biological role, involved in the biosynthesis of clerodane diterpenoids natural products, including salvinorin A with potent agonistic activity on brain kappa-opioid receptors, thus conferring hallucinogenic properties. Diterpene synthase that catalyzes the formation of (-)-kolavenyl diphosphate from geranylgeranyl diphosphate (GGPP) as the first reaction in salvinorin A biosynthesis. This chain is (-)-kolavenyl diphosphate synthase, chloroplastic, found in Salvia divinorum (Maria pastora).